The sequence spans 86 residues: Conotoxin Ec15a (86 aa).

An N-terminal signal peptide occupies residues 1-23; that stretch reads MEKLTILILVATVLLAIQVLGQG. Residues 24-49 constitute a propeptide that is removed on maturation; the sequence is EGEKPPKEWVQQYAAKRLWALMKGPR. A Pyrrolidone carboxylic acid modification is found at glutamine 50.

Belongs to the conotoxin O2 superfamily. In terms of processing, contains 4 disulfide bonds. As to expression, expressed by the venom duct.

It localises to the secreted. This Conus emaciatus (False virgin cone) protein is Conotoxin Ec15a.